Reading from the N-terminus, the 133-residue chain is Helix-loop-helix protein 1 (133 aa).

The segment at 1 to 78 (MMLNSDTMEL…RRRATAKYRT (78 aa)) is disordered. The span at 25 to 39 (DCGGGPGPDGAGSGD) shows a compositional bias: gly residues. Positions 52-65 (ESGRKDLQHLSREE) are enriched in basic and acidic residues. Positions 66 to 78 (RRRRRRATAKYRT) are enriched in basic residues. Positions 75 to 127 (KYRTAHATRERIRVEAFNLAFAELRKLLPTLPPDKKLSKIEILRLAICYISYL) constitute a bHLH domain.

As to quaternary structure, efficient DNA binding requires dimerization with another bHLH protein.

It is found in the nucleus. May serve as DNA-binding protein and may be involved in the control of cell-type determination, possibly within the developing nervous system. The chain is Helix-loop-helix protein 1 (Nhlh1) from Mus musculus (Mouse).